Consider the following 274-residue polypeptide: MANFTTENELEDILHQMGHHIHDKNQFATFKNEIDNLLDRELCLSDADEDVMNESLFASLSVDPAAQFIRQERNFPTENLNIQSPIVSRKRQGKRFIYENVELQSDFDDESSNEYPERNLLVDRAWRSIHRAMETCNGATETLKSISLDGSDIQERSSVDDEENIAESVSVGLSTETEQSELQKSSRPEKEVWTRNVLSLEPGRAPKKYDPVTRYHFYKSEWDRHPAPGEMRRLSLRWKVREFMLRHDVPRLNENNEDWKANHDKDWSPRPYID.

2 disordered regions span residues 156 to 188 (RSSVDDEENIAESVSVGLSTETEQSELQKSSRP) and 255 to 274 (NNEDWKANHDKDWSPRPYID). The segment covering 171–183 (VGLSTETEQSELQ) has biased composition (polar residues). Positions 257-274 (EDWKANHDKDWSPRPYID) are enriched in basic and acidic residues.

It belongs to the HYLS1 family. In terms of assembly, interacts with sas-4; leading to its localization into newly forming centrioles.

The protein localises to the cytoplasm. It is found in the cytoskeleton. It localises to the microtubule organizing center. Its subcellular location is the centrosome. The protein resides in the centriole. The protein localises to the cell projection. It is found in the cilium. Plays an important role in ciliogenesis. This chain is Centriolar and ciliogenesis-associated protein hyls-1, found in Caenorhabditis elegans.